The primary structure comprises 176 residues: Inorganic pyrophosphatase (176 aa).

Substrate is bound by residues lysine 30, arginine 44, and tyrosine 56. Positions 66, 71, and 103 each coordinate Mg(2+). Residue tyrosine 140 coordinates substrate.

The protein belongs to the PPase family. In terms of assembly, homohexamer. The cofactor is Mg(2+).

The protein resides in the cytoplasm. The enzyme catalyses diphosphate + H2O = 2 phosphate + H(+). In terms of biological role, catalyzes the hydrolysis of inorganic pyrophosphate (PPi) forming two phosphate ions. The polypeptide is Inorganic pyrophosphatase (Methanothermobacter thermautotrophicus (strain ATCC 29096 / DSM 1053 / JCM 10044 / NBRC 100330 / Delta H) (Methanobacterium thermoautotrophicum)).